The primary structure comprises 118 residues: Large ribosomal subunit protein bL20 (118 aa).

This sequence belongs to the bacterial ribosomal protein bL20 family.

Functionally, binds directly to 23S ribosomal RNA and is necessary for the in vitro assembly process of the 50S ribosomal subunit. It is not involved in the protein synthesizing functions of that subunit. The chain is Large ribosomal subunit protein bL20 from Pseudomonas aeruginosa (strain LESB58).